A 212-amino-acid polypeptide reads, in one-letter code: Spore germination lipase LipC (212 aa).

Serine 11 acts as the Nucleophile in catalysis. Substrate-binding residues include glycine 50 and asparagine 82. Residues aspartate 186 and histidine 189 contribute to the active site.

Belongs to the 'GDSL' lipolytic enzyme family.

The protein resides in the spore coat. Lipase involved in spore germination. The chain is Spore germination lipase LipC (lipC) from Bacillus licheniformis (strain ATCC 14580 / DSM 13 / JCM 2505 / CCUG 7422 / NBRC 12200 / NCIMB 9375 / NCTC 10341 / NRRL NRS-1264 / Gibson 46).